We begin with the raw amino-acid sequence, 372 residues long: N-methyl-L-tryptophan oxidase (372 aa).

Asp-4 to His-34 contacts FAD. At Cys-308 the chain carries S-8alpha-FAD cysteine.

This sequence belongs to the MSOX/MTOX family. MTOX subfamily. In terms of assembly, monomer. Requires FAD as cofactor.

The catalysed reaction is N(alpha)-methyl-L-tryptophan + O2 + H2O = L-tryptophan + formaldehyde + H2O2. Catalyzes the oxidative demethylation of N-methyl-L-tryptophan. This Escherichia coli O6:H1 (strain CFT073 / ATCC 700928 / UPEC) protein is N-methyl-L-tryptophan oxidase.